The sequence spans 223 residues: Cytidylate kinase (223 aa).

The disordered stretch occupies residues 1 to 23 (MSTSPLVIAIDGPSGSGKSSTSR). 12–20 (GPSGSGKSS) lines the ATP pocket.

The protein belongs to the cytidylate kinase family. Type 1 subfamily.

The protein localises to the cytoplasm. The catalysed reaction is CMP + ATP = CDP + ADP. It carries out the reaction dCMP + ATP = dCDP + ADP. The polypeptide is Cytidylate kinase (Cutibacterium acnes (strain DSM 16379 / KPA171202) (Propionibacterium acnes)).